The primary structure comprises 973 residues: Microtubule-associated protein 1S (973 aa).

The tract at residues 1 to 716 (MAAVMAAPEA…SESLPTLSDS (716 aa)) is necessary for the microtubule-organizing center localization. Disordered regions lie at residues 452–538 (HDLE…GPRA) and 560–853 (LESE…SGRP). A compositionally biased stretch (polar residues) spans 459–468 (RANSQDSLAS). Ser-462 bears the Phosphoserine mark. The span at 490–506 (VRREPALATRDQKKDTR) shows a compositional bias: basic and acidic residues. The segment covering 565-582 (PPAPSPTLSPAQSPPPTA) has biased composition (pro residues). 3 positions are modified to phosphoserine: Ser-586, Ser-591, and Ser-593. Positions 601-973 (PDASPSATTP…EAFPACKVEF (373 aa)) are necessary for interaction with RASSF1. Low complexity predominate over residues 603-621 (ASPSATTPTLTTPSLPAEL). The necessary for association with microtubules stretch occupies residues 645-880 (DPGLSLPLRL…GGGAGHLDQN (236 aa)). Phosphoserine occurs at positions 660 and 684. Residues 703-722 (PTSVSESLPTLSDSDPVPVA) show a composition bias toward low complexity. Position 724 is a phosphoserine (Ser-724). Residues 736–749 (DPPPTPRVPPPLPD) show a composition bias toward pro residues. Residues 782–801 (ARPSSASATPRAATVAAKTK) are compositionally biased toward low complexity. The interval 875-973 (GHLDQNFFLR…EAFPACKVEF (99 aa)) is necessary for association with actin. The necessary for the mitochondrial aggregation and genome destruction stretch occupies residues 881 to 905 (FFLRVRALCYVISGQGQRQEEGLRA).

Belongs to the MAP1 family. In terms of assembly, heterodimer of a heavy and a light chain. Interacts with microtubules and actin. Both MAP1S heavy and light chains interact with microtubules. MAP1S light chain interacts with actin. Interacts with ESR1, LRPPRC, RASSF1, microtubules and VCY2. Interacts with WDR47 (via N-terminus of light chain). Interacts (via C-terminus) with GAN (via Kelch domains). As to expression, expressed in ventral and dorsal horns of the spinal cord, hippocampus, cerebral cortex, molecular, Purkinje and granular cell layers of the cerebellum and in dorsal root ganglia of the PNS (at protein level). Expressed in brain, testis, heart, lung, kidney and liver.

The protein resides in the nucleus. It is found in the cytoplasm. It localises to the cytosol. The protein localises to the cytoskeleton. Its subcellular location is the spindle. Microtubule-associated protein that mediates aggregation of mitochondria resulting in cell death and genomic destruction (MAGD). Plays a role in anchoring the microtubule organizing center to the centrosomes. Binds to DNA. Plays a role in apoptosis. Involved in the formation of microtubule bundles. The sequence is that of Microtubule-associated protein 1S (Map1s) from Mus musculus (Mouse).